Consider the following 418-residue polypeptide: Phospho-N-acetylmuramoyl-pentapeptide-transferase (418 aa).

10 helical membrane-spanning segments follow: residues 22 to 42 (YISFRSVLSFSLSLIISVLIG), 72 to 92 (TPTMGGIIIIIAILIPVLLLA), 95 to 115 (SNIYVLLMLITTIWLGILGLI), 135 to 155 (IIAQVGLGLIVGLIVYLSPNI), 208 to 228 (AATWILFVLITVFIVTAVSNG), 244 to 264 (AIIGVVLGILAYVSANLGFAA), 277 to 297 (LTVFASAFVGACMGFLWHNAF), 302 to 322 (FMGDIGSLTLGGIIAVFAIII), 326 to 346 (LLLPMLCGIFFTESLSVMIQV), and 395 to 415 (KIVVRFWLIGILLAALTVVTL).

Belongs to the glycosyltransferase 4 family. MraY subfamily. Mg(2+) serves as cofactor.

Its subcellular location is the cell inner membrane. It catalyses the reaction UDP-N-acetyl-alpha-D-muramoyl-L-alanyl-gamma-D-glutamyl-meso-2,6-diaminopimeloyl-D-alanyl-D-alanine + di-trans,octa-cis-undecaprenyl phosphate = di-trans,octa-cis-undecaprenyl diphospho-N-acetyl-alpha-D-muramoyl-L-alanyl-D-glutamyl-meso-2,6-diaminopimeloyl-D-alanyl-D-alanine + UMP. It functions in the pathway cell wall biogenesis; peptidoglycan biosynthesis. Its function is as follows. Catalyzes the initial step of the lipid cycle reactions in the biosynthesis of the cell wall peptidoglycan: transfers peptidoglycan precursor phospho-MurNAc-pentapeptide from UDP-MurNAc-pentapeptide onto the lipid carrier undecaprenyl phosphate, yielding undecaprenyl-pyrophosphoryl-MurNAc-pentapeptide, known as lipid I. The protein is Phospho-N-acetylmuramoyl-pentapeptide-transferase of Azobacteroides pseudotrichonymphae genomovar. CFP2.